The sequence spans 92 residues: UPF0250 protein VP0718 (92 aa).

It belongs to the UPF0250 family.

This Vibrio parahaemolyticus serotype O3:K6 (strain RIMD 2210633) protein is UPF0250 protein VP0718.